We begin with the raw amino-acid sequence, 349 residues long: Anthranilate phosphoribosyltransferase (349 aa).

5-phospho-alpha-D-ribose 1-diphosphate-binding positions include Gly82, Gly85 to Asp86, Asn92 to Thr95, Lys110 to Gly118, and Ser122. Gly82 provides a ligand contact to anthranilate. Mg(2+) is bound at residue Ser94. Position 113 (Asn113) interacts with anthranilate. Arg168 lines the anthranilate pocket. Positions 227 and 228 each coordinate Mg(2+).

It belongs to the anthranilate phosphoribosyltransferase family. Homodimer. Mg(2+) is required as a cofactor.

The catalysed reaction is N-(5-phospho-beta-D-ribosyl)anthranilate + diphosphate = 5-phospho-alpha-D-ribose 1-diphosphate + anthranilate. It functions in the pathway amino-acid biosynthesis; L-tryptophan biosynthesis; L-tryptophan from chorismate: step 2/5. Functionally, catalyzes the transfer of the phosphoribosyl group of 5-phosphorylribose-1-pyrophosphate (PRPP) to anthranilate to yield N-(5'-phosphoribosyl)-anthranilate (PRA). This chain is Anthranilate phosphoribosyltransferase, found in Pseudomonas entomophila (strain L48).